Consider the following 479-residue polypeptide: Serralysin C (479 aa).

A propeptide spanning residues 1 to 17 is cleaved from the precursor; that stretch reads MGKNLSLRQDDAQHALS. Histidine 188 is a binding site for Zn(2+). Glutamate 189 is a catalytic residue. Positions 192 and 228 each coordinate Zn(2+). The Ca(2+) site is built by arginine 265, glycine 267, aspartate 297, glycine 299, glycine 300, aspartate 302, threonine 339, glutamate 341, glycine 346, glycine 348, aspartate 350, asparagine 355, alanine 357, asparagine 359, glycine 363, glycine 364, alanine 365, glycine 366, aspartate 368, glycine 372, glycine 373, glycine 375, aspartate 377, glycine 381, glycine 382, alanine 383, glycine 384, aspartate 386, aspartate 395, aspartate 402, and aspartate 412. 3 Hemolysin-type calcium-binding repeats span residues 344 to 361, 362 to 379, and 380 to 397; these read IGGS…DNIL, QGGA…ADTL, and YGGA…QDST.

This sequence belongs to the peptidase M10B family. It depends on Ca(2+) as a cofactor. Requires Zn(2+) as cofactor.

The protein localises to the secreted. It carries out the reaction Preferential cleavage of bonds with hydrophobic residues in P1'.. The protein is Serralysin C (prtC) of Dickeya chrysanthemi (Pectobacterium chrysanthemi).